The primary structure comprises 572 residues: Serine/threonine-protein kinase pak-1 (572 aa).

2 disordered regions span residues 1 to 71 (MKAF…SRPS) and 156 to 195 (QPYS…QGVP). One can recognise a CRIB domain in the interval 67–80 (ISRPSNFEHTIHVG). Residues 81–294 (YDPKTGEFTG…IVSIGNPDRK (214 aa)) are linker. Over residues 178–195 (PMTTSTSSAGYNSKQGVP) the composition is skewed to polar residues. Residues 295–546 (YRKVDKIGSG…ASQLLTHPFL (252 aa)) form the Protein kinase domain. Residues 301–309 (IGSGASGSV) and Lys-324 each bind ATP. Residue Asp-414 is the Proton acceptor of the active site.

The protein belongs to the protein kinase superfamily. STE Ser/Thr protein kinase family. STE20 subfamily. As to quaternary structure, interacts with cdc-42 (GTP-bound form) and cedd-10 (GTP-bound form). Mg(2+) serves as cofactor. It depends on Mn(2+) as a cofactor. In terms of tissue distribution, specifically colocalized with cdc-42 and ced-10 at all hypodermal cell boundaries during embryo elongation throughout the second phase of embryogenesis. Expressed mainly in pharyngeal muscles, the CAN neurons, motor neurons in the ventral nerve cord, several cells in the tail region (including the B and Y cells from L1 to adult, the hypodermal blast cell T in the L1 and some of its progeny in later stages), and the distal tip cells.

The protein resides in the cell membrane. Its subcellular location is the cytoplasm. The protein localises to the cell projection. It is found in the axon. It localises to the perikaryon. It catalyses the reaction L-seryl-[protein] + ATP = O-phospho-L-seryl-[protein] + ADP + H(+). The catalysed reaction is L-threonyl-[protein] + ATP = O-phospho-L-threonyl-[protein] + ADP + H(+). In terms of biological role, required for hypodermal cell fusion, together with cdc-42 and ced-10, leading to embryonic body elongation, which involves dramatic cytoskeletal reorganization. Plays a redundant role with max-2 in dorsal axonal guidance in ventral cord commissural motoneurons and in P neuroblast migration. Acts probably downstream of Rho GTPases mig-2 and ced-10 to regulate these 2 processes. Involved in orientating axonal growth of HSN neurons. During gonad morphogenesis and probably in association with pix-1 and git-1, involved in the migration of distal tip cell (DTC) and in maintaining their sharp tapering morphology. In addition, plays a redundant role with max-2 in DTC-mediated guidance of gonad elongation. May phosphorylate mlc-4. The protein is Serine/threonine-protein kinase pak-1 (pak-1) of Caenorhabditis elegans.